A 128-amino-acid polypeptide reads, in one-letter code: MKGYLWGGASVVLVTVAQLVLKWGMMNIPLLSLADINVQFLTMYFVQLASVMCGLMGYALSMLCWFFALRYLPLNRAYPLLSLSYALVYLGAVLLPWFNEPATLLKTLGAGFILLGIWLINIKPIKAS.

Topologically, residues 1–10 (MKGYLWGGAS) are cytoplasmic. The chain crosses the membrane as a helical span at residues 11 to 31 (VVLVTVAQLVLKWGMMNIPLL). Topologically, residues 32-47 (SLADINVQFLTMYFVQ) are periplasmic. A helical membrane pass occupies residues 48 to 68 (LASVMCGLMGYALSMLCWFFA). The Cytoplasmic segment spans residues 69–77 (LRYLPLNRA). Residues 78 to 98 (YPLLSLSYALVYLGAVLLPWF) form a helical membrane-spanning segment. The Periplasmic segment spans residues 99–101 (NEP). The helical transmembrane segment at 102–122 (ATLLKTLGAGFILLGIWLINI) threads the bilayer. At 123-128 (KPIKAS) the chain is on the cytoplasmic side.

This sequence belongs to the ArnF family. Heterodimer of ArnE and ArnF.

Its subcellular location is the cell inner membrane. It participates in bacterial outer membrane biogenesis; lipopolysaccharide biosynthesis. Functionally, translocates 4-amino-4-deoxy-L-arabinose-phosphoundecaprenol (alpha-L-Ara4N-phosphoundecaprenol) from the cytoplasmic to the periplasmic side of the inner membrane. This chain is Probable 4-amino-4-deoxy-L-arabinose-phosphoundecaprenol flippase subunit ArnF, found in Yersinia pseudotuberculosis serotype O:1b (strain IP 31758).